The following is a 504-amino-acid chain: Cytochrome P450 2K4 (504 aa).

Cys447 is a binding site for heme.

It belongs to the cytochrome P450 family. Heme serves as cofactor.

It localises to the endoplasmic reticulum membrane. Its subcellular location is the microsome membrane. It catalyses the reaction an organic molecule + reduced [NADPH--hemoprotein reductase] + O2 = an alcohol + oxidized [NADPH--hemoprotein reductase] + H2O + H(+). The polypeptide is Cytochrome P450 2K4 (cyp2k4) (Oncorhynchus mykiss (Rainbow trout)).